We begin with the raw amino-acid sequence, 633 residues long: Protein CASP (633 aa).

Over 1–601 (MAVASEALLQ…LLFSRATRGL (601 aa)) the chain is Cytoplasmic. A disordered region spans residues 39–60 (QKTSLDERKELSSKTKEFRKQP). Coiled-coil stretches lie at residues 111–339 (IEAA…LANK) and 369–433 (SLES…VDVE). The helical; Anchor for type IV membrane protein transmembrane segment at 602–622 (FFMYLILLHLFIMIVLLKLGI) threads the bilayer. The Lumenal segment spans residues 623–633 (AGNTAYTPMNY).

This sequence belongs to the CASP family.

The protein resides in the golgi apparatus membrane. Its function is as follows. May be involved in intra-Golgi transport. The chain is Protein CASP (coy1) from Schizosaccharomyces pombe (strain 972 / ATCC 24843) (Fission yeast).